We begin with the raw amino-acid sequence, 372 residues long: Uroporphyrinogen decarboxylase (372 aa).

Substrate contacts are provided by residues 35–39 (RQAGR), D85, Y166, S221, and H342.

The protein belongs to the uroporphyrinogen decarboxylase family. Homodimer.

It is found in the cytoplasm. The catalysed reaction is uroporphyrinogen III + 4 H(+) = coproporphyrinogen III + 4 CO2. It participates in porphyrin-containing compound metabolism; protoporphyrin-IX biosynthesis; coproporphyrinogen-III from 5-aminolevulinate: step 4/4. Its function is as follows. Catalyzes the decarboxylation of four acetate groups of uroporphyrinogen-III to yield coproporphyrinogen-III. The chain is Uroporphyrinogen decarboxylase from Methylibium petroleiphilum (strain ATCC BAA-1232 / LMG 22953 / PM1).